Reading from the N-terminus, the 156-residue chain is Ribosomal RNA large subunit methyltransferase H (156 aa).

S-adenosyl-L-methionine-binding positions include Leu-73, Gly-104, and 123–128 (VSSLTL).

This sequence belongs to the RNA methyltransferase RlmH family. As to quaternary structure, homodimer.

It is found in the cytoplasm. The enzyme catalyses pseudouridine(1915) in 23S rRNA + S-adenosyl-L-methionine = N(3)-methylpseudouridine(1915) in 23S rRNA + S-adenosyl-L-homocysteine + H(+). Functionally, specifically methylates the pseudouridine at position 1915 (m3Psi1915) in 23S rRNA. The sequence is that of Ribosomal RNA large subunit methyltransferase H from Paraburkholderia phymatum (strain DSM 17167 / CIP 108236 / LMG 21445 / STM815) (Burkholderia phymatum).